A 399-amino-acid chain; its full sequence is Exodeoxyribonuclease 7 large subunit (399 aa).

The protein belongs to the XseA family. As to quaternary structure, heterooligomer composed of large and small subunits.

Its subcellular location is the cytoplasm. The enzyme catalyses Exonucleolytic cleavage in either 5'- to 3'- or 3'- to 5'-direction to yield nucleoside 5'-phosphates.. Bidirectionally degrades single-stranded DNA into large acid-insoluble oligonucleotides, which are then degraded further into small acid-soluble oligonucleotides. The protein is Exodeoxyribonuclease 7 large subunit of Clostridium beijerinckii (strain ATCC 51743 / NCIMB 8052) (Clostridium acetobutylicum).